The primary structure comprises 38 residues: MKVLASVKRICRNCKIIKRKGVVRVICSSDPRHKQRQG.

Belongs to the bacterial ribosomal protein bL36 family.

This is Large ribosomal subunit protein bL36 from Ralstonia nicotianae (strain ATCC BAA-1114 / GMI1000) (Ralstonia solanacearum).